The chain runs to 474 residues: Bifunctional protein HldE (474 aa).

The tract at residues 1–318 (MKLSMPRFDQ…RAIQREEGSE (318 aa)) is ribokinase. 194 to 197 (NLSE) is an ATP binding site. Asp-263 is an active-site residue. Residues 343 to 474 (FTNGCFDILH…AIVEKIRGQG (132 aa)) form a cytidylyltransferase region.

It in the N-terminal section; belongs to the carbohydrate kinase PfkB family. In the C-terminal section; belongs to the cytidylyltransferase family. As to quaternary structure, homodimer.

It carries out the reaction D-glycero-beta-D-manno-heptose 7-phosphate + ATP = D-glycero-beta-D-manno-heptose 1,7-bisphosphate + ADP + H(+). The enzyme catalyses D-glycero-beta-D-manno-heptose 1-phosphate + ATP + H(+) = ADP-D-glycero-beta-D-manno-heptose + diphosphate. It functions in the pathway nucleotide-sugar biosynthesis; ADP-L-glycero-beta-D-manno-heptose biosynthesis; ADP-L-glycero-beta-D-manno-heptose from D-glycero-beta-D-manno-heptose 7-phosphate: step 1/4. Its pathway is nucleotide-sugar biosynthesis; ADP-L-glycero-beta-D-manno-heptose biosynthesis; ADP-L-glycero-beta-D-manno-heptose from D-glycero-beta-D-manno-heptose 7-phosphate: step 3/4. Catalyzes the phosphorylation of D-glycero-D-manno-heptose 7-phosphate at the C-1 position to selectively form D-glycero-beta-D-manno-heptose-1,7-bisphosphate. Functionally, catalyzes the ADP transfer from ATP to D-glycero-beta-D-manno-heptose 1-phosphate, yielding ADP-D-glycero-beta-D-manno-heptose. The polypeptide is Bifunctional protein HldE (Pseudomonas syringae pv. tomato (strain ATCC BAA-871 / DC3000)).